Reading from the N-terminus, the 430-residue chain is Adenylosuccinate synthetase (430 aa).

GTP-binding positions include 12-18 (GDEGKGK) and 40-42 (GHT). The active-site Proton acceptor is the D13. Mg(2+)-binding residues include D13 and G40. IMP contacts are provided by residues 13-16 (DEGK), 38-41 (NAGH), T130, R144, Q224, T239, and R303. Catalysis depends on H41, which acts as the Proton donor. 299-305 (TNTGRPR) is a substrate binding site. Residues R305, 331–333 (KLD), and 413–415 (STS) contribute to the GTP site.

It belongs to the adenylosuccinate synthetase family. Homodimer. Mg(2+) is required as a cofactor.

The protein localises to the cytoplasm. The enzyme catalyses IMP + L-aspartate + GTP = N(6)-(1,2-dicarboxyethyl)-AMP + GDP + phosphate + 2 H(+). It participates in purine metabolism; AMP biosynthesis via de novo pathway; AMP from IMP: step 1/2. Functionally, plays an important role in the de novo pathway of purine nucleotide biosynthesis. Catalyzes the first committed step in the biosynthesis of AMP from IMP. The sequence is that of Adenylosuccinate synthetase from Rhodopseudomonas palustris (strain HaA2).